We begin with the raw amino-acid sequence, 358 residues long: Peptide chain release factor 1 (358 aa).

Q233 carries the post-translational modification N5-methylglutamine.

This sequence belongs to the prokaryotic/mitochondrial release factor family. Post-translationally, methylated by PrmC. Methylation increases the termination efficiency of RF1.

It localises to the cytoplasm. Functionally, peptide chain release factor 1 directs the termination of translation in response to the peptide chain termination codons UAG and UAA. The polypeptide is Peptide chain release factor 1 (Staphylococcus aureus (strain MRSA252)).